The following is a 122-amino-acid chain: Dihydroneopterin aldolase (122 aa).

Substrate contacts are provided by residues glutamate 21, tyrosine 53, and valine 72–glutamate 73. Lysine 98 (proton donor/acceptor) is an active-site residue.

This sequence belongs to the DHNA family. In terms of assembly, homooctamer.

It catalyses the reaction 7,8-dihydroneopterin = 6-hydroxymethyl-7,8-dihydropterin + glycolaldehyde. It carries out the reaction 7,8-dihydroneopterin = 7,8-dihydromonapterin. Its pathway is cofactor biosynthesis; tetrahydrofolate biosynthesis; 2-amino-4-hydroxy-6-hydroxymethyl-7,8-dihydropteridine diphosphate from 7,8-dihydroneopterin triphosphate: step 3/4. Catalyzes the conversion of 7,8-dihydroneopterin to 6-hydroxymethyl-7,8-dihydropterin. Can use L-threo-dihydroneopterin and D-erythro-dihydroneopterin as substrates for the formation of 6-hydroxymethyldihydropterin, but it can also catalyze the epimerization of carbon 2' of dihydroneopterin to dihydromonapterin at appreciable velocity. In Escherichia coli O6:H1 (strain CFT073 / ATCC 700928 / UPEC), this protein is Dihydroneopterin aldolase (folB).